The chain runs to 398 residues: Potassium channel subfamily K member 4 (398 aa).

The Cytoplasmic segment spans residues 1-3 (MRS). Residues 4–24 (TTLLALLALVLLYLVSGALVF) form a helical membrane-spanning segment. Topologically, residues 25–88 (QALEQPHEQQ…WTNSSNHSSA (64 aa)) are extracellular. N-linked (GlcNAc...) asparagine glycosylation is found at asparagine 81 and asparagine 84. The helical intramembrane region spans 89 to 103 (WNLGSAFFFSGTIIT). Residues threonine 104, isoleucine 105, glycine 106, and tyrosine 107 each contribute to the K(+) site. The selectivity filter 1 stretch occupies residues 104–109 (TIGYGN). The stretch at 104–110 (TIGYGNI) is an intramembrane region. Topologically, residues 111 to 118 (VLHTDAGR) are extracellular. A helical membrane pass occupies residues 119-151 (LFCIFYALVGIPLFGMLLAGVGDRLGSSLRRGI). The Cytoplasmic portion of the chain corresponds to 152 to 173 (GHIEAIFLKWHVPPGLVRSLSA). A helical transmembrane segment spans residues 174-195 (VLFLLIGCLLFVLTPTFVFSYM). The Extracellular portion of the chain corresponds to 196–200 (ESWSK). The helical intramembrane region spans 201–214 (LEAIYFVIVTLTTV). Residues threonine 213, valine 214, glycine 215, and phenylalanine 216 each contribute to the K(+) site. Residues 213 to 218 (TVGFGD) are selectivity filter 2. The stretch at 215 to 220 (GFGDYV) is an intramembrane region. The Extracellular portion of the chain corresponds to 221–234 (PGDGTGQNSPAYQP). A helical transmembrane segment spans residues 235–261 (LVWFWILFGLAYFASVLTTIGNWLRAV). Over 262-398 (SRRTRAEMGG…GRLRDKAVPV (137 aa)) the chain is Cytoplasmic. Polar residues predominate over residues 282 to 292 (TVTARVTQRTG). The interval 282–398 (TVTARVTQRT…GRLRDKAVPV (117 aa)) is disordered. The segment covering 370–389 (PRGRRRPNPSKKPSRPRGPG) has biased composition (basic residues).

The protein belongs to the two pore domain potassium channel (TC 1.A.1.8) family. Homodimer; disulfide-linked. Forms heterodimers with other 2-pore domain K(+) channel subunits, such as KCNK2 and KCNK10. In terms of processing, N-glycosylated. Expressed in brain, spinal cord and eye. Not detected in heart, skeletal muscle, liver, lungs, kidney and testis.

Its subcellular location is the cell membrane. It is found in the cell projection. The protein localises to the axon. It catalyses the reaction K(+)(in) = K(+)(out). The catalysed reaction is Rb(+)(in) = Rb(+)(out). The enzyme catalyses Cs(+)(in) = Cs(+)(out). Activated by arachidonic acid and other polyunsaturated fatty acids. Not affected by volatile general anesthetics such as chloroform, diethyl ether, halothane and isoflurane. Activated at intracellular and extracellular basic pHs. In terms of biological role, k(+) channel that conducts voltage-dependent outward rectifying currents upon membrane depolarization. Voltage sensing is coupled to K(+) electrochemical gradient in an 'ion flux gating' mode where outward but not inward ion flow opens the gate. Converts to voltage-independent 'leak' conductance mode upon stimulation by various stimuli including mechanical membrane stretch, basic pH, temperature and lipids. Homo- and heterodimerizes to form functional channels with distinct regulatory and gating properties. At trigeminal A-beta afferent nerves, the heterodimer of KCNK2/TREK-1 and KCNK4/TRAAK is mostly coexpressed at nodes of Ranvier where it conducts voltage-independent mechanosensitive and thermosensitive currents, allowing rapid action potential repolarization, high speed and high frequence saltatory conduction on myelinated nerves to ensure prompt sensory responses. Permeable to other monovalent cations such as Rb(+) and Cs(+). The chain is Potassium channel subfamily K member 4 from Mus musculus (Mouse).